A 226-amino-acid polypeptide reads, in one-letter code: UPF0758 protein GK2618 (226 aa).

The region spanning 104–226 (VIRCPEDGAK…FISLKEKGYV (123 aa)) is the MPN domain. Zn(2+) is bound by residues His175, His177, and Asp188. The short motif at 175–188 (HNHPSGDPTPSRED) is the JAMM motif element.

Belongs to the UPF0758 family.

The chain is UPF0758 protein GK2618 from Geobacillus kaustophilus (strain HTA426).